Consider the following 1207-residue polypeptide: DNA-directed RNA polymerase subunit beta' (1207 aa).

The Zn(2+) site is built by C60, C62, C75, and C78. Mg(2+)-binding residues include D450, D452, and D454. Zn(2+) contacts are provided by C819, C893, C900, and C903.

This sequence belongs to the RNA polymerase beta' chain family. In terms of assembly, the RNAP catalytic core consists of 2 alpha, 1 beta, 1 beta' and 1 omega subunit. When a sigma factor is associated with the core the holoenzyme is formed, which can initiate transcription. Mg(2+) serves as cofactor. Zn(2+) is required as a cofactor.

It catalyses the reaction RNA(n) + a ribonucleoside 5'-triphosphate = RNA(n+1) + diphosphate. DNA-dependent RNA polymerase catalyzes the transcription of DNA into RNA using the four ribonucleoside triphosphates as substrates. In Streptococcus pyogenes serotype M3 (strain SSI-1), this protein is DNA-directed RNA polymerase subunit beta'.